Reading from the N-terminus, the 322-residue chain is Beta-1,3-galactosyltransferase bre-5 (322 aa).

At 1–16 the chain is on the cytoplasmic side; sequence MFLCVRILKRKYHELS. A helical; Signal-anchor for type II membrane protein transmembrane segment spans residues 17–37; that stretch reads SFQKLLIFTITIFLLWVLGVV. Over 38 to 322 the chain is Lumenal; it reads DKFRETSFGD…YEYSQLNGFE (285 aa). The N-linked (GlcNAc...) asparagine glycan is linked to Asn150.

Belongs to the glycosyltransferase 31 family. Expressed in the gut.

Its subcellular location is the golgi apparatus membrane. It participates in protein modification; protein glycosylation. Its function is as follows. Transfers N-acetylgalactosamine onto mannose groups of carbohydrate substrates. Required for susceptibility to pore-forming crystal toxins in conjunction with bre-1, bre-2, bre-3, and bre-4. Involved in resistance to the nematotoxic C.cinerea galectin Cgl2. This chain is Beta-1,3-galactosyltransferase bre-5, found in Caenorhabditis elegans.